Consider the following 1298-residue polypeptide: DNA-directed RNA polymerase subunit beta' (1298 aa).

Residues C60, C62, C75, and C78 each contribute to the Zn(2+) site. Residues D535, D537, and D539 each coordinate Mg(2+). The Zn(2+) site is built by C877, C954, C961, and C964.

The protein belongs to the RNA polymerase beta' chain family. In terms of assembly, the RNAP catalytic core consists of 2 alpha, 1 beta, 1 beta' and 1 omega subunit. When a sigma factor is associated with the core the holoenzyme is formed, which can initiate transcription. Mg(2+) serves as cofactor. Requires Zn(2+) as cofactor.

It carries out the reaction RNA(n) + a ribonucleoside 5'-triphosphate = RNA(n+1) + diphosphate. Functionally, DNA-dependent RNA polymerase catalyzes the transcription of DNA into RNA using the four ribonucleoside triphosphates as substrates. This chain is DNA-directed RNA polymerase subunit beta', found in Micrococcus luteus (strain ATCC 4698 / DSM 20030 / JCM 1464 / CCM 169 / CCUG 5858 / IAM 1056 / NBRC 3333 / NCIMB 9278 / NCTC 2665 / VKM Ac-2230) (Micrococcus lysodeikticus).